A 177-amino-acid chain; its full sequence is Large ribosomal subunit protein uL6 (177 aa).

It belongs to the universal ribosomal protein uL6 family. In terms of assembly, part of the 50S ribosomal subunit.

Its function is as follows. This protein binds to the 23S rRNA, and is important in its secondary structure. It is located near the subunit interface in the base of the L7/L12 stalk, and near the tRNA binding site of the peptidyltransferase center. The polypeptide is Large ribosomal subunit protein uL6 (Brucella abortus (strain S19)).